Here is a 139-residue protein sequence, read N- to C-terminus: D-ribose pyranase (139 aa).

Histidine 20 acts as the Proton donor in catalysis. Substrate-binding positions include aspartate 28, histidine 106, and 128–130; that span reads YAN.

This sequence belongs to the RbsD / FucU family. RbsD subfamily. Homodecamer.

The protein localises to the cytoplasm. The enzyme catalyses beta-D-ribopyranose = beta-D-ribofuranose. It functions in the pathway carbohydrate metabolism; D-ribose degradation; D-ribose 5-phosphate from beta-D-ribopyranose: step 1/2. In terms of biological role, catalyzes the interconversion of beta-pyran and beta-furan forms of D-ribose. This is D-ribose pyranase from Actinobacillus pleuropneumoniae serotype 5b (strain L20).